A 465-amino-acid polypeptide reads, in one-letter code: UDP-N-acetylmuramate--L-alanine ligase (465 aa).

Position 115-121 (115-121) interacts with ATP; it reads GAHGKTT.

Belongs to the MurCDEF family.

Its subcellular location is the cytoplasm. The catalysed reaction is UDP-N-acetyl-alpha-D-muramate + L-alanine + ATP = UDP-N-acetyl-alpha-D-muramoyl-L-alanine + ADP + phosphate + H(+). It functions in the pathway cell wall biogenesis; peptidoglycan biosynthesis. In terms of biological role, cell wall formation. The sequence is that of UDP-N-acetylmuramate--L-alanine ligase from Coxiella burnetii (strain CbuG_Q212) (Coxiella burnetii (strain Q212)).